A 388-amino-acid chain; its full sequence is L-lactate dehydrogenase (388 aa).

Positions 1-380 (MIISAASDYR…SADALSRVTR (380 aa)) constitute an FMN hydroxy acid dehydrogenase domain. Position 24 (Tyr24) interacts with substrate. 2 residues coordinate FMN: Ser106 and Gln127. Residue Tyr129 coordinates substrate. Position 155 (Thr155) interacts with FMN. Arg164 contributes to the substrate binding site. Lys251 is a binding site for FMN. Catalysis depends on His275, which acts as the Proton acceptor. Arg278 is a binding site for substrate. 306 to 330 (DSGIRSGLDVVRMLALGADAVLLGR) is a binding site for FMN.

The protein belongs to the FMN-dependent alpha-hydroxy acid dehydrogenase family. FMN is required as a cofactor.

It is found in the cell inner membrane. It catalyses the reaction (S)-lactate + A = pyruvate + AH2. In terms of biological role, catalyzes the conversion of L-lactate to pyruvate. Is coupled to the respiratory chain. This is L-lactate dehydrogenase from Xanthomonas euvesicatoria pv. vesicatoria (strain 85-10) (Xanthomonas campestris pv. vesicatoria).